Here is a 360-residue protein sequence, read N- to C-terminus: DNA polymerase IV (360 aa).

Residues 8–191 (VLHVDMDSFF…LPVGRIPGIG (184 aa)) enclose the UmuC domain. D12 and D110 together coordinate Mg(2+). Residue E111 is part of the active site.

This sequence belongs to the DNA polymerase type-Y family. In terms of assembly, monomer. Mg(2+) is required as a cofactor.

The protein resides in the cytoplasm. It carries out the reaction DNA(n) + a 2'-deoxyribonucleoside 5'-triphosphate = DNA(n+1) + diphosphate. Poorly processive, error-prone DNA polymerase involved in untargeted mutagenesis. Copies undamaged DNA at stalled replication forks, which arise in vivo from mismatched or misaligned primer ends. These misaligned primers can be extended by PolIV. Exhibits no 3'-5' exonuclease (proofreading) activity. May be involved in translesional synthesis. The polypeptide is DNA polymerase IV (Methanoculleus marisnigri (strain ATCC 35101 / DSM 1498 / JR1)).